The primary structure comprises 121 residues: MDLLKVLSQMILFLLFLYLSPLGGHSYPLGSPSQSPEQFKMQKLLELIREKSEEMAQRQLLKDQGLTKEHPKRVLRSQGSTLRVQQRPQNSKVTHISSCFGHKIDRIGSVSRLGCNALKLL.

Residues 1 to 26 (MDLLKVLSQMILFLLFLYLSPLGGHS) form the signal peptide. The tract at residues 61–89 (LKDQGLTKEHPKRVLRSQGSTLRVQQRPQ) is disordered. Over residues 77–89 (SQGSTLRVQQRPQ) the composition is skewed to polar residues. C99 and C115 are joined by a disulfide.

The protein belongs to the natriuretic peptide family. The precursor molecule is proteolytically cleaved by the endoprotease Furin to produce brain natriuretic peptide 45. May undergo further proteolytic cleavage by various proteases such as DPP4, MME and possibly FAP, to give rise to a variety of shorter peptides. May be cleaved at Ser-91 by the prolyl endopeptidase FAP (seprase) activity (in vitro). May be degraded by IDE. During IDE degradation, the resulting products initially increase the activation of NPR1 and can also stimulate NPR2 to produce cGMP before the fragments are completely degraded and inactivated by IDE (in vitro). Expressed abundantly in the ventricle, and in a lesser extent in the atrium (at protein level).

It localises to the secreted. Its function is as follows. Cardiac hormone that plays a key role in mediating cardio-renal homeostasis. May also function as a paracrine antifibrotic factor in the heart. Acts by specifically binding and stimulating NPR1 to produce cGMP, which in turn activates effector proteins that drive various biological responses. Likely involved in regulating the extracellular fluid volume and maintaining the fluid-electrolyte balance through natriuresis, diuresis, kaluresis and chloruresis. The polypeptide is Natriuretic peptides B (Nppb) (Mus musculus (Mouse)).